Here is a 315-residue protein sequence, read N- to C-terminus: Ectopic P granules protein 4 (315 aa).

6 helical membrane-spanning segments follow: residues 84 to 104, 113 to 133, 146 to 166, 190 to 210, 221 to 241, and 242 to 262; these read IGFL…FSFF, IGYI…ALWF, LPPP…ISAL, IVYL…FFDG, IFES…LACS, and ISSN…FFII.

Belongs to the EI24 family. Expressed in pharyngeal and body wall muscles and intestine cells.

The protein resides in the cytoplasm. It is found in the membrane. Involved in autophagy. Thought to act in autophagasome and omegasome formation. The sequence is that of Ectopic P granules protein 4 from Caenorhabditis elegans.